Reading from the N-terminus, the 531-residue chain is Ribosomal protein uS12 methylthiotransferase RimO (531 aa).

Polar residues-rich tracts occupy residues 1 to 19 and 55 to 67; these read MPNI…SQPA and HNQN…SSEV. A disordered region spans residues 1–77; it reads MPNISTESVN…VSAASAKTTT (77 aa). The segment covering 68 to 77 has biased composition (low complexity); it reads VSAASAKTTT. The region spanning 88–198 is the MTTase N-terminal domain; the sequence is PKIGFVSLGC…VIRAVALHVP (111 aa). [4Fe-4S] cluster-binding residues include Cys97, Cys133, Cys162, Cys236, Cys240, and Cys243. Residues 222–459 enclose the Radical SAM core domain; the sequence is LTPSHYAYLK…MTLQQDISAQ (238 aa). One can recognise a TRAM domain in the interval 462-531; that stretch reads QEKIGKTLMV…EYDLFASYKG (70 aa).

This sequence belongs to the methylthiotransferase family. RimO subfamily. Requires [4Fe-4S] cluster as cofactor.

The protein resides in the cytoplasm. The catalysed reaction is L-aspartate(89)-[ribosomal protein uS12]-hydrogen + (sulfur carrier)-SH + AH2 + 2 S-adenosyl-L-methionine = 3-methylsulfanyl-L-aspartate(89)-[ribosomal protein uS12]-hydrogen + (sulfur carrier)-H + 5'-deoxyadenosine + L-methionine + A + S-adenosyl-L-homocysteine + 2 H(+). In terms of biological role, catalyzes the methylthiolation of an aspartic acid residue of ribosomal protein uS12. This is Ribosomal protein uS12 methylthiotransferase RimO from Psychrobacter cryohalolentis (strain ATCC BAA-1226 / DSM 17306 / VKM B-2378 / K5).